The chain runs to 1275 residues: MKRIPRKTKGKSSGKGNDSTERADDGSSQLRDKQNNKAGPATTEPGTSNREQYKARPGIASVQRATESAEMPMKNNDEGTPDKKGNTKGDLVNEHSEAKDEADEATKKQAKDTDKSKAQVTYSDTGINNANELSRSGNVDNEGGSNQKPMSTRIAEATSAIVSKHPARVGLPPTASSGHGYQCHVCSAVLFSPLDLDAHVASHGLHGNMTLTSSDIQRHITEFISSWQNHPIVQVSADVENKKTAQLLHADTPRLVTWDAGLCTSFKIVPIVPAQVPQDVLAYTFFTSSYAIQSPFPEAAVSRIVVHTRWASNVDFDRDSSVIMAPPTENNIHLFKQLLNTETLSVRGANPLMFRANVLHMLLEFVLDNLYLNRHTGFSQDHTPFTEGANLRSLPGPDAEKWYSIMYPTRMGTPNVSKICNFVASCVRNRVGRFDRAQMMNGAMSEWVDVFETSDALTVSIRGRWMARLARMNINPTEIEWALTECAQGYVTVTSPYAPIVNRLMPYRISNAERQISQIIRIMNIGNNATVIQPVLQDISVLLQRISPLQIDPTIISNTMSTVSESTTQTLSPASSILGKLRPSNSDFSSFRVALAGWLYNGVVTTVIDDSSYPKDGGSVTSLENLWDFFILALALPLTTDPCAPVKAFMTLANMMVGFETIPMDNQIYTQSRRASAFSTPHTWPRCFMNIQLISPIDAPILRQWAEIIHRYWPNPSQIRYGAPNVFGSANLFTPPEVLLLPIDHQPANVTTPTLDFTNELTNWRARVCELMKNLVDNQRYQPGWTQSLVSSMRGTLDKLKLIKSMTPMYLQQLAPVELAVIAPMLPFPPFQVPYVRLDRDRVPTMVGVTRQSRDTITQPALSLSTTNTTVGVPLALDARAITVALLSGKYPPDLVTNVWYADAIYPMYADTEVFSNLQRDMITCEAVQTLVTLVAQISETQYPVDRYLDWIPSLRASAATAATFAEWVNTSMKTAFDLSDMLLEPLLSGDPRMTQLAIQYQQYNGRTFNIIPEMPGSVIADCVQLTAEVFNHEYNLFGIARGDIIIGRVQSTHLWSPLAPPPDLVFDRDTPGVHIFGRDCRISFGMNGAAPMIRDETGLMVPFEGNWIFPLALWQMNTRYFNQQFDAWIKTGELRIRIEMGAYPYMLHYYDPRQYANAWNLTSAWLEEITPTSIPSVPFMVPISSDHDISSAPAVQYIISTEYNDRSLFCTNSSSPQTIAGPDKHIPVERYNILTNPDAPPTQIQLPEVVDLYNVVTRYAYETPPITAVVMGVP.

A compositionally biased stretch (basic residues) spans 1-12 (MKRIPRKTKGKS). Residues 1–149 (MKRIPRKTKG…DNEGGSNQKP (149 aa)) form a disordered region. 2 stretches are compositionally biased toward basic and acidic residues: residues 18-35 (DSTE…DKQN) and 75-117 (NNDE…DKSK). Polar residues predominate over residues 118–149 (AQVTYSDTGINNANELSRSGNVDNEGGSNQKP). The C2H2-type zinc finger occupies 181–203 (YQCHVCSAVLFSPLDLDAHVASH).

It belongs to the orthoreovirus lambda-1 protein family. As to quaternary structure, homodecamer; each decamer is made up of two conformers of VP2, called VP2A and VP2B. 12 homodecamers assemble to form an icosahedral capsid. Interacts with protein mu-NS; in viral inclusions. The cofactor is Mg(2+). Mn(2+) serves as cofactor.

The protein resides in the virion. It catalyses the reaction ATP + H2O = ADP + phosphate + H(+). Its function is as follows. Inner capsid protein that self-assembles to form an icosahedral capsid with a T=2 symmetry, which consists of 120 copies of VP2, with channels at each of its five-fold vertices. This capsid constitutes the innermost concentric layer of the viral mature particle. Displays NTPase, RNA 5'-triphosphatase (RTPase) and RNA helicase activities. Helicase activity might be involved in unwinding or reannealing dsRNA during RNA synthesis. RTPase enzymatic activity represents the first step in RNA capping, which yields a 5'-diphosphorylated plus-strand RNA. The polypeptide is Inner capsid protein lambda-1 (L3) (Reovirus type 3 (strain Dearing) (T3D)).